A 130-amino-acid polypeptide reads, in one-letter code: Small ribosomal subunit protein uS9 (130 aa).

This sequence belongs to the universal ribosomal protein uS9 family.

This is Small ribosomal subunit protein uS9 from Anoxybacillus flavithermus (strain DSM 21510 / WK1).